A 195-amino-acid chain; its full sequence is Recombination protein RecR (195 aa).

Residues 56–71 (CRQCHSFSDDDICPIC) form a C4-type zinc finger. The Toprim domain maps to 79–174 (SVLCVVETAA…KVTRIAQGIP (96 aa)).

Belongs to the RecR family.

Its function is as follows. May play a role in DNA repair. It seems to be involved in an RecBC-independent recombinational process of DNA repair. It may act with RecF and RecO. This Psychrobacter sp. (strain PRwf-1) protein is Recombination protein RecR.